The sequence spans 186 residues: Biphenyl dioxygenase subunit beta (186 aa).

It belongs to the bacterial ring-hydroxylating dioxygenase beta subunit family. Heterohexamer consisting of 3 BphA subunits and 3 BphE subunits. A ferredoxin (BphF) and a ferredoxin reductase (BphG) must be present to obtain activity.

It catalyses the reaction biphenyl + NADH + O2 + H(+) = (2R,3S)-3-phenylcyclohexa-3,5-diene-1,2-diol + NAD(+). It functions in the pathway xenobiotic degradation; biphenyl degradation; 2-hydroxy-2,4-pentadienoate and benzoate from biphenyl: step 1/4. Functionally, the beta subunit may be responsible for the substrate specificity of the enzyme. The chain is Biphenyl dioxygenase subunit beta (bphE) from Comamonas testosteroni (Pseudomonas testosteroni).